A 650-amino-acid polypeptide reads, in one-letter code: ATP-binding cassette sub-family G member 3 (650 aa).

At methionine 1–threonine 387 the chain is on the cytoplasmic side. One can recognise an ABC transporter domain in the interval leucine 37–serine 279. One can recognise an ABC transmembrane type-2 domain in the interval lysine 381–valine 644. Residues valine 388 to leucine 408 form a helical membrane-spanning segment. Topologically, residues lysine 409 to glycine 420 are extracellular. Residues leucine 421–valine 441 traverse the membrane as a helical segment. Residues isoleucine 442–glutamate 469 are Cytoplasmic-facing. A helical membrane pass occupies residues leucine 470–glycine 490. At valine 491 to phenylalanine 498 the chain is on the extracellular side. The helical transmembrane segment at phenylalanine 499–isoleucine 519 threads the bilayer. Residues glycine 520–alanine 527 are Cytoplasmic-facing. Residues valine 528–leucine 548 traverse the membrane as a helical segment. Residues tyrosine 549–histidine 623 are Extracellular-facing. The helical transmembrane segment at leucine 624 to valine 644 threads the bilayer. At lysine 645 to arginine 648 the chain is on the cytoplasmic side.

Belongs to the ABC transporter superfamily. ABCG family. Eye pigment precursor importer (TC 3.A.1.204) subfamily. As to quaternary structure, may dimerize with another subunit to form a functional transporter. Highest levels of expression in thymus and spleen. Detected in lung and small intestine.

The protein resides in the membrane. The chain is ATP-binding cassette sub-family G member 3 (Abcg3) from Mus musculus (Mouse).